Here is a 98-residue protein sequence, read N- to C-terminus: Keratin-associated protein 3-3 (98 aa).

3 consecutive repeat copies span residues 3–7 (CCASR), 47–51 (CCDNC), and 89–93 (CCEPC). Residues 3–59 (CCASRGCSVPTGPATTICSSDKSCRCGVCLPSTCPHTVWLLEPTCCDNCPPPCHIPQ) form a 3 X 5 AA repeats of C-C-X(3) region.

It belongs to the KRTAP type 3 family. As to quaternary structure, interacts with hair keratins. As to expression, localized to the upper cortex of the hair shaft.

In terms of biological role, in the hair cortex, hair keratin intermediate filaments are embedded in an interfilamentous matrix, consisting of hair keratin-associated proteins (KRTAP), which are essential for the formation of a rigid and resistant hair shaft through their extensive disulfide bond cross-linking with abundant cysteine residues of hair keratins. The matrix proteins include the high-sulfur and high-glycine-tyrosine keratins. The polypeptide is Keratin-associated protein 3-3 (KRTAP3-3) (Homo sapiens (Human)).